Reading from the N-terminus, the 281-residue chain is Diaminopimelate epimerase (281 aa).

Substrate contacts are provided by asparagine 14 and asparagine 65. The active-site Proton donor is cysteine 74. Substrate-binding positions include 75 to 76 (GN), asparagine 165, asparagine 198, and 216 to 217 (ER). Catalysis depends on cysteine 225, which acts as the Proton acceptor. 226 to 227 (GT) contributes to the substrate binding site.

This sequence belongs to the diaminopimelate epimerase family. Homodimer.

The protein resides in the cytoplasm. It carries out the reaction (2S,6S)-2,6-diaminopimelate = meso-2,6-diaminopimelate. The protein operates within amino-acid biosynthesis; L-lysine biosynthesis via DAP pathway; DL-2,6-diaminopimelate from LL-2,6-diaminopimelate: step 1/1. Its function is as follows. Catalyzes the stereoinversion of LL-2,6-diaminopimelate (L,L-DAP) to meso-diaminopimelate (meso-DAP), a precursor of L-lysine and an essential component of the bacterial peptidoglycan. The protein is Diaminopimelate epimerase of Leptospira interrogans serogroup Icterohaemorrhagiae serovar copenhageni (strain Fiocruz L1-130).